Reading from the N-terminus, the 254-residue chain is Alcohol dehydrogenase (254 aa).

Residue Phe10 to Leu33 coordinates NAD(+). Ser138 is a substrate binding site. Tyr151 (proton acceptor) is an active-site residue.

The protein belongs to the short-chain dehydrogenases/reductases (SDR) family. In terms of assembly, homodimer.

The catalysed reaction is a primary alcohol + NAD(+) = an aldehyde + NADH + H(+). It catalyses the reaction a secondary alcohol + NAD(+) = a ketone + NADH + H(+). This Drosophila nigra (Fruit fly) protein is Alcohol dehydrogenase (Adh).